The following is a 214-amino-acid chain: Phosphatidylserine decarboxylase proenzyme (214 aa).

S183 functions as the Schiff-base intermediate with substrate; via pyruvic acid in the catalytic mechanism. The residue at position 183 (S183) is a Pyruvic acid (Ser); by autocatalysis.

The protein belongs to the phosphatidylserine decarboxylase family. PSD-A subfamily. In terms of assembly, heterodimer of a large membrane-associated beta subunit and a small pyruvoyl-containing alpha subunit. Requires pyruvate as cofactor. In terms of processing, is synthesized initially as an inactive proenzyme. Formation of the active enzyme involves a self-maturation process in which the active site pyruvoyl group is generated from an internal serine residue via an autocatalytic post-translational modification. Two non-identical subunits are generated from the proenzyme in this reaction, and the pyruvate is formed at the N-terminus of the alpha chain, which is derived from the carboxyl end of the proenzyme. The post-translation cleavage follows an unusual pathway, termed non-hydrolytic serinolysis, in which the side chain hydroxyl group of the serine supplies its oxygen atom to form the C-terminus of the beta chain, while the remainder of the serine residue undergoes an oxidative deamination to produce ammonia and the pyruvoyl prosthetic group on the alpha chain.

It is found in the cell membrane. The enzyme catalyses a 1,2-diacyl-sn-glycero-3-phospho-L-serine + H(+) = a 1,2-diacyl-sn-glycero-3-phosphoethanolamine + CO2. Its pathway is phospholipid metabolism; phosphatidylethanolamine biosynthesis; phosphatidylethanolamine from CDP-diacylglycerol: step 2/2. Catalyzes the formation of phosphatidylethanolamine (PtdEtn) from phosphatidylserine (PtdSer). In Desulfotalea psychrophila (strain LSv54 / DSM 12343), this protein is Phosphatidylserine decarboxylase proenzyme.